We begin with the raw amino-acid sequence, 622 residues long: 1-deoxy-D-xylulose-5-phosphate synthase (622 aa).

Residues H74 and 115-117 (GHS) contribute to the thiamine diphosphate site. D146 provides a ligand contact to Mg(2+). Residues 147-148 (GA), N177, F285, and E366 each bind thiamine diphosphate. Residue N177 participates in Mg(2+) binding.

The protein belongs to the transketolase family. DXPS subfamily. In terms of assembly, homodimer. Requires Mg(2+) as cofactor. Thiamine diphosphate is required as a cofactor.

It carries out the reaction D-glyceraldehyde 3-phosphate + pyruvate + H(+) = 1-deoxy-D-xylulose 5-phosphate + CO2. It functions in the pathway metabolic intermediate biosynthesis; 1-deoxy-D-xylulose 5-phosphate biosynthesis; 1-deoxy-D-xylulose 5-phosphate from D-glyceraldehyde 3-phosphate and pyruvate: step 1/1. In terms of biological role, catalyzes the acyloin condensation reaction between C atoms 2 and 3 of pyruvate and glyceraldehyde 3-phosphate to yield 1-deoxy-D-xylulose-5-phosphate (DXP). This is 1-deoxy-D-xylulose-5-phosphate synthase from Magnetococcus marinus (strain ATCC BAA-1437 / JCM 17883 / MC-1).